The chain runs to 220 residues: GTP cyclohydrolase 1 (220 aa).

Residues C113, H116, and C184 each coordinate Zn(2+).

It belongs to the GTP cyclohydrolase I family. As to quaternary structure, homomer.

The enzyme catalyses GTP + H2O = 7,8-dihydroneopterin 3'-triphosphate + formate + H(+). The protein operates within cofactor biosynthesis; 7,8-dihydroneopterin triphosphate biosynthesis; 7,8-dihydroneopterin triphosphate from GTP: step 1/1. This chain is GTP cyclohydrolase 1, found in Hamiltonella defensa subsp. Acyrthosiphon pisum (strain 5AT).